The following is a 311-amino-acid chain: 4-diphosphocytidyl-2-C-methyl-D-erythritol kinase (311 aa).

The active site involves Lys-16. 100 to 110 (PIGAGLAGGSS) serves as a coordination point for ATP. Asp-142 is a catalytic residue.

It belongs to the GHMP kinase family. IspE subfamily.

The enzyme catalyses 4-CDP-2-C-methyl-D-erythritol + ATP = 4-CDP-2-C-methyl-D-erythritol 2-phosphate + ADP + H(+). It functions in the pathway isoprenoid biosynthesis; isopentenyl diphosphate biosynthesis via DXP pathway; isopentenyl diphosphate from 1-deoxy-D-xylulose 5-phosphate: step 3/6. In terms of biological role, catalyzes the phosphorylation of the position 2 hydroxy group of 4-diphosphocytidyl-2C-methyl-D-erythritol. This chain is 4-diphosphocytidyl-2-C-methyl-D-erythritol kinase, found in Prochlorococcus marinus (strain MIT 9312).